The following is a 295-amino-acid chain: Ribosomal RNA small subunit methyltransferase H (295 aa).

S-adenosyl-L-methionine contacts are provided by residues 35-37, E55, F82, D103, and Q110; that span reads GGH.

The protein belongs to the methyltransferase superfamily. RsmH family.

It localises to the cytoplasm. The catalysed reaction is cytidine(1402) in 16S rRNA + S-adenosyl-L-methionine = N(4)-methylcytidine(1402) in 16S rRNA + S-adenosyl-L-homocysteine + H(+). Specifically methylates the N4 position of cytidine in position 1402 (C1402) of 16S rRNA. This chain is Ribosomal RNA small subunit methyltransferase H, found in Desulfotalea psychrophila (strain LSv54 / DSM 12343).